The following is a 1118-amino-acid chain: Carbamoyl phosphate synthase arginine-specific large chain (1118 aa).

Residues 23 to 420 (QLVEGVNSVL…AFQKALRQVD (398 aa)) are carboxyphosphate synthetic domain. ATP is bound by residues Arg-150, Arg-190, Gly-196, Gly-197, Lys-227, Leu-229, Glu-234, Gly-260, Val-261, His-262, Gln-303, and Glu-317. An ATP-grasp 1 domain is found at 154–346 (ASALKDINIP…LAYTAAKIGL (193 aa)). Residues Gln-303, Glu-317, and Asn-319 each contribute to the Mg(2+) site. 3 residues coordinate Mn(2+): Gln-303, Glu-317, and Asn-319. The segment at 421-573 (PSLLGFQGST…YTTYNATKND (153 aa)) is oligomerization domain. Positions 574 to 958 (VEFNENGMLV…SYWTAIQSTM (385 aa)) are carbamoyl phosphate synthetic domain. In terms of domain architecture, ATP-grasp 2 spans 698-890 (SSILDSIDVD…FIEIAVKAFL (193 aa)). The ATP site is built by Arg-734, Lys-773, Ile-775, Glu-780, Gly-805, Val-806, His-807, Ser-808, Gln-848, and Glu-861. Mg(2+)-binding residues include Gln-848, Glu-861, and Asn-863. Mn(2+) contacts are provided by Gln-848, Glu-861, and Asn-863. The interval 959–1102 (NFHVPLPPSG…KILESHDVIV (144 aa)) is allosteric domain. Residues 960 to 1118 (FHVPLPPSGI…WDEFIGFKAY (159 aa)) form the MGS-like domain.

This sequence belongs to the CarB family. In terms of assembly, heterodimer composed of 2 chains; the small (or glutamine) chain promotes the hydrolysis of glutamine to ammonia, which is used by the large (or ammonia) chain to synthesize carbamoyl phosphate. Mg(2+) is required as a cofactor. Mn(2+) serves as cofactor.

It localises to the cytoplasm. The catalysed reaction is hydrogencarbonate + L-glutamine + 2 ATP + H2O = carbamoyl phosphate + L-glutamate + 2 ADP + phosphate + 2 H(+). It carries out the reaction hydrogencarbonate + NH4(+) + 2 ATP = carbamoyl phosphate + 2 ADP + phosphate + 2 H(+). Its pathway is amino-acid biosynthesis; L-arginine biosynthesis; carbamoyl phosphate from bicarbonate: step 1/1. Its function is as follows. Large subunit of the arginine-specific carbamoyl phosphate synthase (CPSase). CPSase catalyzes the formation of carbamoyl phosphate from the ammonia moiety of glutamine, hydrogencarbonate, and phosphate donated by ATP, constituting the first step of 2 biosynthetic pathways, one leading to arginine and/or urea and the other to pyrimidine nucleotides. The large subunit (synthetase) binds the substrates ammonia (free or transferred from glutamine from the small subunit), hydrogencarbonate and ATP and carries out an ATP-coupled ligase reaction, activating hydrogencarbonate by forming carboxy phosphate which reacts with ammonia to form carbamoyl phosphate. The chain is Carbamoyl phosphate synthase arginine-specific large chain (CPA2) from Saccharomyces cerevisiae (strain ATCC 204508 / S288c) (Baker's yeast).